Consider the following 344-residue polypeptide: Anthranilate phosphoribosyltransferase (344 aa).

Residues Gly-86, 89-90 (GD), Thr-94, 96-99 (NIST), 114-122 (KHGNKSASG), and Ser-126 each bind 5-phospho-alpha-D-ribose 1-diphosphate. Anthranilate is bound at residue Gly-86. Ser-98 is a binding site for Mg(2+). An anthranilate-binding site is contributed by Asn-117. Arg-172 is a binding site for anthranilate. Residues Asp-231 and Glu-232 each contribute to the Mg(2+) site.

This sequence belongs to the anthranilate phosphoribosyltransferase family. Homodimer. Requires Mg(2+) as cofactor.

The catalysed reaction is N-(5-phospho-beta-D-ribosyl)anthranilate + diphosphate = 5-phospho-alpha-D-ribose 1-diphosphate + anthranilate. It participates in amino-acid biosynthesis; L-tryptophan biosynthesis; L-tryptophan from chorismate: step 2/5. Functionally, catalyzes the transfer of the phosphoribosyl group of 5-phosphorylribose-1-pyrophosphate (PRPP) to anthranilate to yield N-(5'-phosphoribosyl)-anthranilate (PRA). The polypeptide is Anthranilate phosphoribosyltransferase (Prochlorococcus marinus (strain MIT 9301)).